Reading from the N-terminus, the 151-residue chain is Ribonuclease H (151 aa).

The region spanning 1–141 is the RNase H type-1 domain; it reads MKHVDIFTDG…ADELARKGME (141 aa). Residues Asp9, Glu47, Asp69, and Asp133 each contribute to the Mg(2+) site.

This sequence belongs to the RNase H family. In terms of assembly, monomer. It depends on Mg(2+) as a cofactor.

It localises to the cytoplasm. The catalysed reaction is Endonucleolytic cleavage to 5'-phosphomonoester.. Endonuclease that specifically degrades the RNA of RNA-DNA hybrids. This Rhizobium johnstonii (strain DSM 114642 / LMG 32736 / 3841) (Rhizobium leguminosarum bv. viciae) protein is Ribonuclease H.